The following is a 657-amino-acid chain: Glycogen debranching enzyme (657 aa).

D336 functions as the Nucleophile in the catalytic mechanism. The active-site Proton donor is the E371. The span at 458–467 (NEANGEENRD) shows a compositional bias: basic and acidic residues. Residues 458–479 (NEANGEENRDGTNNNYSNNHGK) are disordered.

Belongs to the glycosyl hydrolase 13 family.

It catalyses the reaction Hydrolysis of (1-&gt;6)-alpha-D-glucosidic linkages to branches with degrees of polymerization of three or four glucose residues in limit dextrin.. The protein operates within glycan degradation; glycogen degradation. In terms of biological role, removes maltotriose and maltotetraose chains that are attached by 1,6-alpha-linkage to the limit dextrin main chain, generating a debranched limit dextrin. This Shigella sonnei (strain Ss046) protein is Glycogen debranching enzyme.